A 505-amino-acid chain; its full sequence is 2,3-bisphosphoglycerate-independent phosphoglycerate mutase (505 aa).

Mn(2+) is bound by residues Asp-12 and Ser-62. Ser-62 functions as the Phosphoserine intermediate in the catalytic mechanism. Substrate-binding positions include His-123, 153–154 (RD), Arg-185, Arg-191, 257–260 (RPDR), and Lys-330. Positions 397, 401, 438, 439, and 456 each coordinate Mn(2+).

Belongs to the BPG-independent phosphoglycerate mutase family. In terms of assembly, monomer. The cofactor is Mn(2+).

The catalysed reaction is (2R)-2-phosphoglycerate = (2R)-3-phosphoglycerate. The protein operates within carbohydrate degradation; glycolysis; pyruvate from D-glyceraldehyde 3-phosphate: step 3/5. Catalyzes the interconversion of 2-phosphoglycerate and 3-phosphoglycerate. The protein is 2,3-bisphosphoglycerate-independent phosphoglycerate mutase of Staphylococcus aureus (strain Mu50 / ATCC 700699).